A 122-amino-acid polypeptide reads, in one-letter code: Large ribosomal subunit protein bL12 (122 aa).

The protein belongs to the bacterial ribosomal protein bL12 family. As to quaternary structure, homodimer. Part of the ribosomal stalk of the 50S ribosomal subunit. Forms a multimeric L10(L12)X complex, where L10 forms an elongated spine to which 2 to 4 L12 dimers bind in a sequential fashion. Binds GTP-bound translation factors.

Forms part of the ribosomal stalk which helps the ribosome interact with GTP-bound translation factors. Is thus essential for accurate translation. This chain is Large ribosomal subunit protein bL12, found in Mycoplasma mycoides subsp. mycoides SC (strain CCUG 32753 / NCTC 10114 / PG1).